Reading from the N-terminus, the 276-residue chain is MTLQQEIIRALGAKPHINAEEEIRRSVDFLKAYLKTYPFLKSLVLGISGGQDSTLTGKLCQTAITELREETGNDALQFIAVRLPFGVQADEQDCQDAIAFIQPDRVLTVNIKGAVLASEQALREAGIELSDFVRGNEKARERMKAQYSIAGMTNGVVVGTDHAAEAVTGFFTKYGDGGTDINPLFRLNKRQGKQLLAALGCPEHLYKKAPTADLEDDRPSLPDEAALGVTYDNIDDYLEGKTLDASIAKIIEGWYIRTEHKRRTPITVFDDFWKRS.

Residue 46 to 53 (GISGGQDS) coordinates ATP. D52 is a Mg(2+) binding site. R140 contributes to the deamido-NAD(+) binding site. T160 is an ATP binding site. E165 contacts Mg(2+). Deamido-NAD(+) contacts are provided by K173 and D180. Residues K189 and T211 each contribute to the ATP site. A deamido-NAD(+)-binding site is contributed by 260–261 (HK).

The protein belongs to the NAD synthetase family. Homodimer.

It carries out the reaction deamido-NAD(+) + NH4(+) + ATP = AMP + diphosphate + NAD(+) + H(+). Its pathway is cofactor biosynthesis; NAD(+) biosynthesis; NAD(+) from deamido-NAD(+) (ammonia route): step 1/1. In terms of biological role, catalyzes the ATP-dependent amidation of deamido-NAD to form NAD. Uses ammonia as a nitrogen source. The protein is NH(3)-dependent NAD(+) synthetase of Citrobacter koseri (strain ATCC BAA-895 / CDC 4225-83 / SGSC4696).